A 1394-amino-acid chain; its full sequence is Tubulin glycylase 3E (1394 aa).

4 disordered regions span residues 201-230, 563-582, 620-663, and 682-706; these read KKKS…QRKE, NQKD…QNSI, DENE…TSNF, and STVK…NLKE. Residues 205-216 are compositionally biased toward low complexity; that stretch reads NFQNKSQSQLNN. Residues 217 to 230 show a composition bias toward basic and acidic residues; sequence HKNEEKKPSQQRKE. Over residues 568–582 the composition is skewed to low complexity; the sequence is QSNQTSSVISQQNSI. Over residues 627–655 the composition is skewed to polar residues; sequence KENVLQQKKNQSNQIVTSQQQSNNYFKQE. A compositionally biased stretch (low complexity) spans 682-703; sequence STVKNSDNNNQNQTNPQNQNTN. Residues 911–1250 enclose the TTL domain; it reads RFIFNITVIA…QNNLQEDLEI (340 aa). Residues 1058 to 1061, Lys-1079, and Asp-1081 contribute to the ATP site; that span reads QKYI. IQ domains are found at residues 1320-1349 and 1348-1377; these read QYWG…QKFT and FTFA…QQQT.

It is found in the cell projection. It localises to the cilium. Its subcellular location is the cytoplasm. The protein localises to the cytoskeleton. The protein resides in the cilium axoneme. Functionally, probable glycylase which modifies tubulin, generating side chains of glycine on the gamma-carboxyl groups of specific glutamate residues within the C-terminal tail of tubulin. The polypeptide is Tubulin glycylase 3E (TTLL3E) (Tetrahymena thermophila (strain SB210)).